We begin with the raw amino-acid sequence, 277 residues long: Omega-amidase NIT2 (277 aa).

The CN hydrolase domain maps to 4 to 248 (FRLAVVQLHV…ESVVYADIDL (245 aa)). E43 serves as the catalytic Proton acceptor. K112 serves as the catalytic Proton donor. C153 acts as the Nucleophile in catalysis.

The protein belongs to the carbon-nitrogen hydrolase superfamily. NIT1/NIT2 family. As to quaternary structure, homodimer.

It is found in the cytoplasm. It carries out the reaction 2-oxoglutaramate + H2O = 2-oxoglutarate + NH4(+). The catalysed reaction is 2-oxosuccinamate + H2O = oxaloacetate + NH4(+). Functionally, has omega-amidase activity. The role of omega-amidase is to remove potentially toxic intermediates by converting 2-oxoglutaramate and 2-oxosuccinamate to biologically useful 2-oxoglutarate and oxaloacetate, respectively. The sequence is that of Omega-amidase NIT2 (nit2) from Danio rerio (Zebrafish).